The primary structure comprises 633 residues: Kelch repeat and BTB domain-containing protein 11 (633 aa).

A disordered region spans residues 1–118; the sequence is MENSVAPFVL…EDPPSRHEHA (118 aa). Residues 35 to 60 show a composition bias toward polar residues; the sequence is STAQTPCSLSASLCFSSGDDSPPQSR. Residues 61–73 are compositionally biased toward low complexity; that stretch reads ASAAEGSEASPPS. Phosphoserine occurs at positions 70, 73, 92, 95, 107, and 113. The region spanning 146–206 is the BTB domain; sequence PDLVIEVAGR…AYSGRMAGVR (61 aa). 4 Kelch repeats span residues 317–365, 366–418, 419–463, and 465–506; these read RPQS…VLFN, YLFL…ALDG, HLYA…TCNG, and IYVS…ALDG.

This Mus musculus (Mouse) protein is Kelch repeat and BTB domain-containing protein 11 (Kbtbd11).